A 506-amino-acid polypeptide reads, in one-letter code: NAD(P)H-quinone oxidoreductase subunit 2, chloroplastic (506 aa).

A run of 13 helical transmembrane segments spans residues 15-35, 39-59, 84-104, 113-133, 137-157, 172-192, 217-237, 249-269, 283-303, 339-359, 382-402, 418-438, and 471-491; these read LIPE…DLVY, CHAW…VLLG, LSLV…LLSI, APSE…LVAG, LLMM…LTGY, LLVG…MYGI, CALA…AAPF, PTPV…ILAV, WHLI…FIAV, IVYL…VILF, ALCL…AGFF, SLVW…LSVV, and VGIF…NSMV.

The protein belongs to the complex I subunit 2 family. In terms of assembly, NDH is composed of at least 16 different subunits, 5 of which are encoded in the nucleus.

It is found in the plastid. It localises to the chloroplast thylakoid membrane. The enzyme catalyses a plastoquinone + NADH + (n+1) H(+)(in) = a plastoquinol + NAD(+) + n H(+)(out). It carries out the reaction a plastoquinone + NADPH + (n+1) H(+)(in) = a plastoquinol + NADP(+) + n H(+)(out). NDH shuttles electrons from NAD(P)H:plastoquinone, via FMN and iron-sulfur (Fe-S) centers, to quinones in the photosynthetic chain and possibly in a chloroplast respiratory chain. The immediate electron acceptor for the enzyme in this species is believed to be plastoquinone. Couples the redox reaction to proton translocation, and thus conserves the redox energy in a proton gradient. The chain is NAD(P)H-quinone oxidoreductase subunit 2, chloroplastic from Nephroselmis olivacea (Green alga).